A 163-amino-acid chain; its full sequence is UPF0260 protein GOX1406 (163 aa).

Belongs to the UPF0260 family.

The polypeptide is UPF0260 protein GOX1406 (Gluconobacter oxydans (strain 621H) (Gluconobacter suboxydans)).